The sequence spans 181 residues: Large ribosomal subunit protein uL5 (181 aa).

Belongs to the universal ribosomal protein uL5 family. As to quaternary structure, part of the 50S ribosomal subunit; part of the 5S rRNA/L5/L18/L25 subcomplex. Contacts the 5S rRNA and the P site tRNA. Forms a bridge to the 30S subunit in the 70S ribosome.

This is one of the proteins that bind and probably mediate the attachment of the 5S RNA into the large ribosomal subunit, where it forms part of the central protuberance. In the 70S ribosome it contacts protein S13 of the 30S subunit (bridge B1b), connecting the 2 subunits; this bridge is implicated in subunit movement. Contacts the P site tRNA; the 5S rRNA and some of its associated proteins might help stabilize positioning of ribosome-bound tRNAs. The polypeptide is Large ribosomal subunit protein uL5 (Campylobacter lari (strain RM2100 / D67 / ATCC BAA-1060)).